The following is a 486-amino-acid chain: MISNGSKTRKNLGAIALAGMVISSMIGGGIFSLPQNMAASAGAGAIILAWILTGIGMFFIANTFKILSLVRPDLTTGIYMYSREGFGPYVGFTIGWGYWLCQIFGNVGYAVMTMDALNYFFPPYFKGGNTIPAIIGGSILIWVFNFIVLKGIRQASFINVIGTICKLIPLLIFIIITAFFFKLAIFKTDFWGHTATKTQPLLGSVTSQLKSTMLVTLWAFIGIEGAVVMSARAKSPNAVGKATILGFSGCLIVYVLLSLLPFGSLFQHQLAGIANPSTAGVLDILVGRWGEILMNIGLLIAILSSWLSWTVIVAEIPYSAAKNGTFPEIFTIENAAHSPKVSLYITSALMQVAMLLVYFSTNAWSTMLSITGVMVLPAYLASAAFLVKFSKDKKYPNKGPIKSFTAKYTGILAVIYSIWLIYAGGIKYLFMAIVLLALGIPFYIEAGKKGKNAKTFFAKKEVTKITIIAFLALLAIFLFSTERIRL.

A run of 12 helical transmembrane segments spans residues 12-32, 41-61, 85-105, 129-149, 161-181, 211-231, 242-262, 296-316, 341-361, 367-387, 418-438, and 461-481; these read LGAI…GIFS, AGAG…FFIA, GFGP…QIFG, NTIP…FIVL, IGTI…AFFF, STML…VMSA, ATIL…LLPF, IGLL…VAEI, VSLY…YFST, MLSI…AFLV, IWLI…LLAL, and EVTK…LFST.

Belongs to the amino acid-polyamine-organocation (APC) superfamily. Basic amino acid/polyamine antiporter (APA) (TC 2.A.3.2) family.

Its subcellular location is the cell inner membrane. Functionally, catalyzes the exchange of L-arginine for agmatine. The arginine uptake by the bacterium in the macrophage may be a virulence factor against the host innate immune response. The sequence is that of Arginine/agmatine antiporter (aaxC) from Chlamydia felis (strain Fe/C-56) (Chlamydophila felis).